The following is an 813-amino-acid chain: Protein tramtrack, alpha isoform (813 aa).

The BTB domain maps to 33–98 (TDVTLAVEGQ…MYRGEVSVDQ (66 aa)). Disordered regions lie at residues 118–148 (EVND…PQLQ), 171–324 (ANAG…GPSE), 356–428 (TTPA…MPKK), and 526–585 (AGLP…LDDQ). Over residues 125 to 145 (SPAAAAAGAGATGSESTATTP) the composition is skewed to low complexity. A compositionally biased stretch (polar residues) spans 176–187 (TPTLPVQPSLLS). A compositionally biased stretch (basic residues) spans 192 to 201 (PKRKRGRPRK). 3 positions are modified to phosphoserine: S203, S205, and S206. T209 is modified (phosphothreonine). Residues 254–285 (HTDDLNESRDSLPSKRSKNSKDHRVVSHHEDN) show a composition bias toward basic and acidic residues. Polar residues-rich tracts occupy residues 302 to 324 (LFGS…GPSE), 356 to 369 (TTPA…TPTK), and 377 to 388 (ATGSNNSNSLLK). Residues 560–578 (SGKKGAKRPIQRRRVRRKA) are compositionally biased toward basic residues. 2 consecutive C2H2-type zinc fingers follow at residues 610–638 (YRCT…FLYH) and 646–669 (FPCP…KMTH). S682 is modified (phosphoserine).

In terms of assembly, interacts with CoRest/CG33525, suggesting that it acts by recruiting a CoRest-containing corepressor complex. Interacts with phyl.

The protein localises to the nucleus. Binds to a number of sites in the transcriptional regulatory region of ftz. Isoform alpha is required to repress genes that promote the R7 cell fate. Probable repressor of the transcription of the segmentation genes ftz, eve, h, odd, run, and en. May bind to the region 5'-AGGG[CT]GG-3'. Degradation of ttk is directed by binding of sinah or sina, via the adapter molecule phyl which binds to the BTB domain of ttk. The protein is Protein tramtrack, alpha isoform (ttk) of Drosophila melanogaster (Fruit fly).